Here is a 312-residue protein sequence, read N- to C-terminus: Homoserine O-acetyltransferase (312 aa).

Cys142 acts as the Acyl-thioester intermediate in catalysis. Residues Lys163 and Ser192 each coordinate substrate. His235 serves as the catalytic Proton acceptor. Glu237 is an active-site residue. Position 249 (Arg249) interacts with substrate.

This sequence belongs to the MetA family.

The protein resides in the cytoplasm. It carries out the reaction L-homoserine + acetyl-CoA = O-acetyl-L-homoserine + CoA. It participates in amino-acid biosynthesis; L-methionine biosynthesis via de novo pathway; O-acetyl-L-homoserine from L-homoserine: step 1/1. Its function is as follows. Transfers an acetyl group from acetyl-CoA to L-homoserine, forming acetyl-L-homoserine. The sequence is that of Homoserine O-acetyltransferase from Ruegeria sp. (strain TM1040) (Silicibacter sp.).